A 248-amino-acid chain; its full sequence is 2,3-bisphosphoglycerate-dependent phosphoglycerate mutase (248 aa).

Substrate contacts are provided by residues 8–15 (RHGESTWN), 21–22 (TG), Arg60, 87–90 (ERHY), Lys98, 114–115 (RR), and 183–184 (GN). His9 functions as the Tele-phosphohistidine intermediate in the catalytic mechanism. Glu87 functions as the Proton donor/acceptor in the catalytic mechanism.

Belongs to the phosphoglycerate mutase family. BPG-dependent PGAM subfamily. In terms of assembly, homodimer.

It catalyses the reaction (2R)-2-phosphoglycerate = (2R)-3-phosphoglycerate. The protein operates within carbohydrate degradation; glycolysis; pyruvate from D-glyceraldehyde 3-phosphate: step 3/5. Catalyzes the interconversion of 2-phosphoglycerate and 3-phosphoglycerate. In Burkholderia vietnamiensis (strain G4 / LMG 22486) (Burkholderia cepacia (strain R1808)), this protein is 2,3-bisphosphoglycerate-dependent phosphoglycerate mutase.